We begin with the raw amino-acid sequence, 181 residues long: Probable N-acetyltransferase YjcK (181 aa).

The 166-residue stretch at 7 to 172 (IYVRPLEVTD…NGVWEDHQVL (166 aa)) folds into the N-acetyltransferase domain.

This sequence belongs to the acetyltransferase family. RimJ subfamily.

The enzyme catalyses an N-terminal L-alpha-aminoacyl-[protein] + acetyl-CoA = N-terminal N(alpha)-acetyl-L-alpha-aminoacyl-[protein] + CoA + H(+). Functionally, probable N-terminal protein acetyltransferase. This chain is Probable N-acetyltransferase YjcK (yjcK), found in Bacillus subtilis (strain 168).